The sequence spans 223 residues: Alpha-enolase (223 aa).

Ser8 is a Mg(2+) binding site. Tyr12 is modified (phosphotyrosine). N6-acetyllysine is present on Lys25. Residue Glu39 coordinates substrate. The residue at position 61 (Lys61) is an N6-acetyllysine. The active-site Proton donor is Glu69. Lys87 is modified (N6-acetyllysine; alternate). The residue at position 87 (Lys87) is an N6-malonyllysine; alternate. N6-succinyllysine; alternate is present on Lys87. Residues Asp99 and Asp119 each coordinate Mg(2+). Asp119 contributes to the substrate binding site. N6-acetyllysine occurs at positions 133 and 141. Residue Lys141 is the Proton acceptor of the active site. Substrate contacts are provided by residues 168–171 (SHRS) and Lys192. The tract at residues 202 to 223 (YNQILRIEEELGSKSFRNPLAK) is required for interaction with PLG. An N6-acetyllysine; alternate modification is found at Lys215. Lys215 is modified (N6-malonyllysine; alternate). Residue Lys215 is modified to N6-succinyllysine; alternate.

The protein belongs to the enolase family. In terms of assembly, mammalian enolase is composed of 3 isozyme subunits, alpha, beta and gamma, which can form homodimers or heterodimers which are cell-type and development-specific. ENO1 interacts with PLG in the neuronal plasma membrane and promotes its activation. The C-terminal lysine is required for this binding. Interacts with ENO4 and PGAM2. Interacts with CMTM6. It depends on Mg(2+) as a cofactor. Post-translationally, ISGylated. Lysine 2-hydroxyisobutyrylation (Khib) by p300/EP300 activates the phosphopyruvate hydratase activity.

The protein localises to the cytoplasm. Its subcellular location is the cell membrane. It carries out the reaction (2R)-2-phosphoglycerate = phosphoenolpyruvate + H2O. It functions in the pathway carbohydrate degradation; glycolysis; pyruvate from D-glyceraldehyde 3-phosphate: step 4/5. Glycolytic enzyme the catalyzes the conversion of 2-phosphoglycerate to phosphoenolpyruvate. In addition to glycolysis, involved in various processes such as growth control, hypoxia tolerance and allergic responses. May also function in the intravascular and pericellular fibrinolytic system due to its ability to serve as a receptor and activator of plasminogen on the cell surface of several cell-types such as leukocytes and neurons. Stimulates immunoglobulin production. This chain is Alpha-enolase, found in Mesocricetus auratus (Golden hamster).